The chain runs to 780 residues: Pentatricopeptide repeat-containing protein At1g79540 (780 aa).

17 PPR repeats span residues 91–125 (SRES…GVSV), 126–160 (DSYC…DCRP), 161–196 (DVFT…NCSP), 197–231 (NLYT…GISP), 232–266 (NRVT…GNYP), 267–301 (DSVA…GFVL), 302–336 (GLRG…NIKP), 337–371 (DIIL…GISP), 372–406 (DTYC…ESFP), 407–441 (DACT…GCSP), 442–476 (SVAT…RPAS), 481–515 (LSHS…GSSP), 516–550 (DIVS…GLSP), 551–585 (DSVT…RHSP), 653–687 (TLGP…KILV), 688–722 (TPPS…NFKL), and 723–758 (MPRV…GYNV).

This sequence belongs to the PPR family. P subfamily.

The polypeptide is Pentatricopeptide repeat-containing protein At1g79540 (Arabidopsis thaliana (Mouse-ear cress)).